The primary structure comprises 505 residues: Histidine ammonia-lyase (505 aa).

Positions 141–143 form a cross-link, 5-imidazolinone (Ala-Gly); that stretch reads ASG. S142 bears the 2,3-didehydroalanine (Ser) mark.

The protein belongs to the PAL/histidase family. In terms of processing, contains an active site 4-methylidene-imidazol-5-one (MIO), which is formed autocatalytically by cyclization and dehydration of residues Ala-Ser-Gly.

The protein localises to the cytoplasm. The enzyme catalyses L-histidine = trans-urocanate + NH4(+). It functions in the pathway amino-acid degradation; L-histidine degradation into L-glutamate; N-formimidoyl-L-glutamate from L-histidine: step 1/3. The polypeptide is Histidine ammonia-lyase (Bacillus cereus (strain G9842)).